Reading from the N-terminus, the 662-residue chain is Polyunsaturated fatty acid lipoxygenase ALOX15 (662 aa).

Positions 2-114 (GLYRIRVSTG…VLSLPEGTGR (113 aa)) constitute a PLAT domain. One can recognise a Lipoxygenase domain in the interval 115–662 (TVGDDPQGLF…PSIVENSVAI (548 aa)). Residues H360, H365, H540, H544, and I662 each coordinate Fe cation.

Belongs to the lipoxygenase family. In terms of assembly, interacts with PEBP1; in response to IL13/interleukin-13, prevents the interaction of PEBP1 with RAF1 to activate the ERK signaling cascade. It depends on Fe cation as a cofactor.

The protein resides in the cytoplasm. The protein localises to the cytosol. It is found in the cell membrane. It localises to the lipid droplet. The catalysed reaction is (5Z,8Z,11Z,14Z)-eicosatetraenoate + O2 = (12S)-hydroperoxy-(5Z,8Z,10E,14Z)-eicosatetraenoate. It catalyses the reaction (9Z,12Z)-octadecadienoate + O2 = (13S)-hydroperoxy-(9Z,11E)-octadecadienoate. The enzyme catalyses (5Z,8Z,11Z,14Z)-eicosatetraenoate + O2 = (15S)-hydroperoxy-(5Z,8Z,11Z,13E)-eicosatetraenoate. It carries out the reaction (5Z,8Z,11Z,14Z)-eicosatetraenoate + 2 O2 = (14R,15S)-dihydroperoxy-(5Z,8Z,10E,12E)-eicosatetraenoate. The catalysed reaction is (5Z,8Z,11Z,14Z)-eicosatetraenoate + 2 O2 = (8S,15S)-dihydroperoxy-(5Z,9E,11Z,13E)-eicosatetraenoate. It catalyses the reaction (14S,15R)-epoxy-(5Z,8Z,11Z)-eicosatrienoate + O2 = (8S)-hydroperoxy-(14S,15R)-epoxy-(5Z,9E,11Z)-eicosatrienoate. The enzyme catalyses (14S,15R)-epoxy-(5Z,8Z,11Z)-eicosatrienoate + O2 = (12S)-hydroperoxy-(14S,15R)-epoxy-(5Z,8Z,10E)-eicosatrienoate. It carries out the reaction (14R,15S)-epoxy-(5Z,8Z,11Z)-eicosatrienoate + O2 = (5S)-hydroperoxy-(14R,15S)-epoxy-(6E,8Z,11Z)-eicosatrienoate. The catalysed reaction is (14R,15S)-epoxy-(5Z,8Z,11Z)-eicosatrienoate + O2 = (12S)-hydroperoxy-(14R,15S)-epoxy-(5Z,8Z,10E)-eicosatrienoate. It catalyses the reaction (15R)-hydroperoxy-(5Z,8Z,11Z,13E)-eicosatetraenoate = 15-oxo-(5Z,8Z,11Z,13E)-eicosatetraenoate + H2O. The enzyme catalyses (15S)-hydroperoxy-(5Z,8Z,11Z,13E)-eicosatetraenoate = (14S,15S)-epoxy-(5Z,8Z,10E,12E)-eicosatetraenoate + H2O. It carries out the reaction (12S)-hydroperoxy-(5Z,8Z,10E,14Z)-eicosatetraenoate = (8S)-hydroxy-(11S,12S)-epoxy-(5Z,9E,14Z)-eicosatrienoate. The catalysed reaction is (4Z,7Z,10Z,13Z,16Z)-docosapentaenoate + O2 = 14-hydroperoxy-(4Z,7Z,10Z,12E,16Z)-docosapentaenoate. It catalyses the reaction (7Z,10Z,13Z,16Z,19Z)-docosapentaenoate + O2 = 14-hydroperoxy-(7Z,10Z,12E,16Z,19Z)-docosapentaenoate. The enzyme catalyses (4Z,7Z,10Z,13Z,16Z,19Z)-docosahexaenoate + O2 = (14S)-hydroperoxy-(4Z,7Z,10Z,12E,16Z,19Z)-docosahexaenoate. It carries out the reaction (4Z,7Z,10Z,13Z,16Z,19Z)-docosahexaenoate + O2 = (17S)-hydroperoxy-(4Z,7Z,10Z,13Z,15E,19Z)-docosahexaenoate. The catalysed reaction is (7S)-hydroperoxy-(4Z,8E,10Z,13Z,16Z,19Z)-docosahexaenoate + O2 = (7S,14S)-dihydroperoxy-(4Z,8E,10Z,12E,16Z,19Z)-docosahexaenoate. It catalyses the reaction (7S)-hydroperoxy-(4Z,8E,10Z,13Z,16Z,19Z)-docosahexaenoate + O2 = (7S,17S)-dihydroperoxy-(4Z,8E,10Z,13Z,15E,19Z)-docosahexaenoate. The enzyme catalyses (4Z,7Z,10Z,13Z,16Z,19Z)-docosahexaenoate + O2 = (11S)-hydroperoxy-(4Z,7Z,9E,13Z,16Z,19Z)-docosahexaenoate. It carries out the reaction N-(5Z,8Z,11Z,14Z)-eicosatetraenoyl-taurine + O2 = N-(12S)-hydroperoxy-(5Z,8Z,10E,14Z)-eicosatetraenoyl-taurine. The catalysed reaction is N-(5Z,8Z,11Z,14Z)-eicosatetraenoyl-gamma-aminobutanoate + O2 = N-(12S)-hydroperoxy-(5Z,8Z,10E,14Z)-eicosatetraenoyl-gamma-aminobutanoate. It catalyses the reaction N-(5Z,8Z,11Z,14Z)-eicosatetraenoyl-glycine + O2 = N-(12S)-hydroperoxy-(5Z,8Z,10E,14Z)-eicosatetraenoyl-glycine. The enzyme catalyses N-(5Z,8Z,11Z,14Z)-eicosatetraenoyl-L-alanine + O2 = N-(12S)-hydroperoxy-(5Z,8Z,10E,14Z)-eicosatetraenoyl-alanine. It carries out the reaction N-(5Z,8Z,11Z,14Z)-eicosatetraenoyl-taurine + O2 = N-(15S)-hydroperoxy-(5Z,8Z,11Z,13E)-eicosatetraenoyl-taurine. The catalysed reaction is N-(5Z,8Z,11Z,14Z)-eicosatetraenoyl-gamma-aminobutanoate + O2 = N-(15S)-hydroperoxy-(5Z,8Z,11Z,13E)-eicosatetraenoyl-gamma-aminobutanoate. It catalyses the reaction N-(5Z,8Z,11Z,14Z)-eicosatetraenoyl-glycine + O2 = N-(15S)-hydroperoxy-(5Z,8Z,11Z,13E)-eicosatetraenoyl-glycine. The enzyme catalyses N-(5Z,8Z,11Z,14Z)-eicosatetraenoyl-L-alanine + O2 = N-(15S)-hydroperoxy-(5Z,8Z,11Z,13E)-eicosatetraenoyl-alanine. The protein operates within lipid metabolism; hydroperoxy eicosatetraenoic acid biosynthesis. Its function is as follows. Non-heme iron-containing dioxygenase that catalyzes the stereo-specific peroxidation of free and esterified polyunsaturated fatty acids generating a spectrum of bioactive lipid mediators. It inserts peroxyl groups at C12 or C15 of arachidonate ((5Z,8Z,11Z,14Z)-eicosatetraenoate) producing both 12-hydroperoxyeicosatetraenoate/12-HPETE and 15-hydroperoxyeicosatetraenoate/15-HPETE. It may then act on 12-HPETE to produce hepoxilins, which may show pro-inflammatory properties. Can also peroxidize linoleate ((9Z,12Z)-octadecadienoate) to 13-hydroperoxyoctadecadienoate. May participate in the sequential oxidations of DHA ((4Z,7Z,10Z,13Z,16Z,19Z)-docosahexaenoate) to generate specialized pro-resolving mediators (SPMs)like resolvin D5 ((7S,17S)-diHPDHA) and (7S,14S)-diHPDHA, that actively down-regulate the immune response and have anti-aggregation properties with platelets. Can convert epoxy fatty acids to hydroperoxy-epoxides derivatives followed by an intramolecular nucleophilic substitution leading to the formation of monocyclic endoperoxides. Plays an important role during the maintenance of self-tolerance by peroxidizing membrane-bound phosphatidylethanolamine which can then signal the sorting process for clearance of apoptotic cells during inflammation and prevent an autoimmune response. In addition to its role in the immune and inflammatory responses, this enzyme may play a role in epithelial wound healing in the cornea through production of lipoxin A4 (LXA(4)) and docosahexaenoic acid-derived neuroprotectin D1 (NPD1; 10R,17S-HDHA), both lipid autacoids exhibit anti-inflammatory and neuroprotective properties. Furthermore, it may regulate actin polymerization which is crucial for several biological processes such as the phagocytosis of apoptotic cells. It is also implicated in the generation of endogenous ligands for peroxisome proliferator activated receptor (PPAR-gamma), hence modulating macrophage development and function. It may also exert a negative effect on skeletal development by regulating bone mass through this pathway. As well as participates in ER stress and downstream inflammation in adipocytes, pancreatic islets, and liver. Finally, it is also involved in the cellular response to IL13/interleukin-13. The chain is Polyunsaturated fatty acid lipoxygenase ALOX15 from Pongo abelii (Sumatran orangutan).